We begin with the raw amino-acid sequence, 173 residues long: ATP synthase subunit b (173 aa).

The helical transmembrane segment at 15–35 threads the bilayer; it reads GVEWGTVIVQVLTFIVLLALL.

The protein belongs to the ATPase B chain family. As to quaternary structure, F-type ATPases have 2 components, F(1) - the catalytic core - and F(0) - the membrane proton channel. F(1) has five subunits: alpha(3), beta(3), gamma(1), delta(1), epsilon(1). F(0) has three main subunits: a(1), b(2) and c(10-14). The alpha and beta chains form an alternating ring which encloses part of the gamma chain. F(1) is attached to F(0) by a central stalk formed by the gamma and epsilon chains, while a peripheral stalk is formed by the delta and b chains.

The protein localises to the cell membrane. Its function is as follows. F(1)F(0) ATP synthase produces ATP from ADP in the presence of a proton or sodium gradient. F-type ATPases consist of two structural domains, F(1) containing the extramembraneous catalytic core and F(0) containing the membrane proton channel, linked together by a central stalk and a peripheral stalk. During catalysis, ATP synthesis in the catalytic domain of F(1) is coupled via a rotary mechanism of the central stalk subunits to proton translocation. In terms of biological role, component of the F(0) channel, it forms part of the peripheral stalk, linking F(1) to F(0). This chain is ATP synthase subunit b, found in Staphylococcus aureus (strain MRSA252).